Consider the following 214-residue polypeptide: Outer-membrane lipoprotein carrier protein (214 aa).

An N-terminal signal peptide occupies residues 1–23 (MNKRITVLSLLLATSLSSAAAMA).

This sequence belongs to the LolA family. Monomer.

Its subcellular location is the periplasm. Participates in the translocation of lipoproteins from the inner membrane to the outer membrane. Only forms a complex with a lipoprotein if the residue after the N-terminal Cys is not an aspartate (The Asp acts as a targeting signal to indicate that the lipoprotein should stay in the inner membrane). The chain is Outer-membrane lipoprotein carrier protein from Shewanella frigidimarina (strain NCIMB 400).